Reading from the N-terminus, the 246-residue chain is NAD-dependent protein deacetylase (246 aa).

The Deacetylase sirtuin-type domain maps to 1 to 246 (MKMKEFLDLL…RRVMEEGGIS (246 aa)). NAD(+) is bound by residues A22, T26, F33, R34, Q98, I100, D101, and H116. F33 contributes to the nicotinamide binding site. 2 residues coordinate nicotinamide: I100 and D101. H116 acts as the Proton acceptor in catalysis. Residues C124, C127, C148, and C151 each coordinate Zn(2+). The NAD(+) site is built by S189, S190, N214, L215, G216, D231, and V232.

Belongs to the sirtuin family. Class U subfamily. The cofactor is Zn(2+).

It localises to the cytoplasm. The enzyme catalyses N(6)-acetyl-L-lysyl-[protein] + NAD(+) + H2O = 2''-O-acetyl-ADP-D-ribose + nicotinamide + L-lysyl-[protein]. With respect to regulation, non-competitively inhibited by nicotinamide in vitro and in vivo, but not by nicotinic acid. Nicotinamide inhibits the deacetylation activity by reacting with a reaction intermediate. Its function is as follows. NAD-dependent protein deacetylase which modulates the activities of several enzymes which are inactive in their acetylated form. Also has depropionylation activity in vitro. Also able to ADP-ribosylate peptide substrates with Arg or Lys in the +2 position. The role of this function in vivo is not clear. In Thermotoga maritima (strain ATCC 43589 / DSM 3109 / JCM 10099 / NBRC 100826 / MSB8), this protein is NAD-dependent protein deacetylase.